A 1891-amino-acid chain; its full sequence is Protein TIC 214 (1891 aa).

The next 6 membrane-spanning stretches (helical) occupy residues 18–38 (IINSVVVVGLYYGFLTTFSIG), 64–84 (FITGQLMMFISIYYAPLHLAL), 87–107 (PHTITVLALPYLLFHFFWNNH), 124–144 (LSIQCVFLNNLIFQLFNHFIL), 172–192 (VGWLIGHILFMKWLGLVLVWI), and 221–241 (IFSILLFITCVYYLGRIPSPI). 3 disordered regions span residues 248–300 (EASK…EGWD), 788–807 (EEQTKREEKKEKDKKEDNKR), and 1580–1607 (KNRSQEAKEPPSQRERGSDIENKGNLSP). Acidic residues predominate over residues 256-268 (VESEEERDVEIET). The span at 1582 to 1601 (RSQEAKEPPSQRERGSDIEN) shows a compositional bias: basic and acidic residues.

The protein belongs to the TIC214 family. Part of the Tic complex.

It localises to the plastid. It is found in the chloroplast inner membrane. Involved in protein precursor import into chloroplasts. May be part of an intermediate translocation complex acting as a protein-conducting channel at the inner envelope. The chain is Protein TIC 214 from Solanum lycopersicum (Tomato).